The chain runs to 39 residues: RapF inhibitor (39 aa).

Positions 1–34 (MKLKSKLLLSCLALSTVFVATTIANAPTHQIEVA) are excised as a propeptide.

Belongs to the Phr family. In terms of assembly, interacts with RapF and inhibits its interaction with ComA. Contains a predicted signal peptide cleavage site in the N-terminal region, however the propeptide is probably subject to only one processing event, at the N-terminal end of the mature peptide.

The protein localises to the secreted. It is found in the cytoplasm. Functionally, signaling molecule involved in the regulation of genetic competence development. Secreted during production, but the mature peptide acts intracellularly, indicating that it needs to be imported into the cell to function. Stimulates expression of the genes controlled by ComA, a transcriptional factor that regulates the development of genetic competence. Acts by inhibiting RapF, which regulates the activity of ComA. The protein is RapF inhibitor (phrF) of Bacillus subtilis (strain 168).